We begin with the raw amino-acid sequence, 341 residues long: Ribosomal RNA small subunit methyltransferase C (341 aa).

Belongs to the methyltransferase superfamily. RsmC family. Monomer.

The protein localises to the cytoplasm. It catalyses the reaction guanosine(1207) in 16S rRNA + S-adenosyl-L-methionine = N(2)-methylguanosine(1207) in 16S rRNA + S-adenosyl-L-homocysteine + H(+). In terms of biological role, specifically methylates the guanine in position 1207 of 16S rRNA in the 30S particle. The polypeptide is Ribosomal RNA small subunit methyltransferase C (Shewanella amazonensis (strain ATCC BAA-1098 / SB2B)).